A 512-amino-acid polypeptide reads, in one-letter code: Centrosomal protein CCDC61 (512 aa).

Position 1 is an N-acetylmethionine (M1). The segment at 1–143 (MDQPAGLQVD…PLPLPYQGKP (143 aa)) is head domain. Coiled-coil stretches lie at residues 178–205 (IWHL…SREE) and 248–275 (CRRL…LTSE). Residues 276–477 (LALYKRGRRT…KSLANSGGWV (202 aa)) form a disordered region. Residue T285 is modified to Phosphothreonine. A compositionally biased stretch (basic and acidic residues) spans 293 to 306 (TREDRASSSRERSA). Phosphoserine occurs at positions 334, 336, 373, and 376. Residues 407-425 (RSSSVDSFRSRCSSASSCS) show a composition bias toward low complexity. S447 and S473 each carry phosphoserine.

The protein belongs to the CCDC61 family. In terms of assembly, forms homodimers (via head domain). Interacts with CEP170. Interacts with PCM1 and CEP131. Binds tubulin.

Its subcellular location is the cytoplasm. The protein localises to the cytoskeleton. The protein resides in the microtubule organizing center. It is found in the centrosome. It localises to the centriolar satellite. Its subcellular location is the cilium basal body. Microtubule-binding centrosomal protein required for centriole cohesion, independently of the centrosome-associated protein/CEP250 and rootletin/CROCC linker. In interphase, required for anchoring microtubule at the mother centriole subdistal appendages and for centrosome positioning. During mitosis, may be involved in spindle assembly and chromatin alignment by regulating the organization of spindle microtubules into a symmetrical structure. Has been proposed to play a role in CEP170 recruitment to centrosomes. However, this function could not be confirmed. Plays a non-essential role in ciliogenesis. The protein is Centrosomal protein CCDC61 of Homo sapiens (Human).